Consider the following 150-residue polypeptide: SsrA-binding protein (150 aa).

Residues 129-150 (ETEKQRDWQREKSRIMKGGSKE) form a disordered region.

This sequence belongs to the SmpB family.

It is found in the cytoplasm. In terms of biological role, required for rescue of stalled ribosomes mediated by trans-translation. Binds to transfer-messenger RNA (tmRNA), required for stable association of tmRNA with ribosomes. tmRNA and SmpB together mimic tRNA shape, replacing the anticodon stem-loop with SmpB. tmRNA is encoded by the ssrA gene; the 2 termini fold to resemble tRNA(Ala) and it encodes a 'tag peptide', a short internal open reading frame. During trans-translation Ala-aminoacylated tmRNA acts like a tRNA, entering the A-site of stalled ribosomes, displacing the stalled mRNA. The ribosome then switches to translate the ORF on the tmRNA; the nascent peptide is terminated with the 'tag peptide' encoded by the tmRNA and targeted for degradation. The ribosome is freed to recommence translation, which seems to be the essential function of trans-translation. The chain is SsrA-binding protein from Cupriavidus pinatubonensis (strain JMP 134 / LMG 1197) (Cupriavidus necator (strain JMP 134)).